A 118-amino-acid chain; its full sequence is Large ribosomal subunit protein uL22 (118 aa).

Belongs to the universal ribosomal protein uL22 family. As to quaternary structure, part of the 50S ribosomal subunit.

Its function is as follows. This protein binds specifically to 23S rRNA; its binding is stimulated by other ribosomal proteins, e.g. L4, L17, and L20. It is important during the early stages of 50S assembly. It makes multiple contacts with different domains of the 23S rRNA in the assembled 50S subunit and ribosome. The globular domain of the protein is located near the polypeptide exit tunnel on the outside of the subunit, while an extended beta-hairpin is found that lines the wall of the exit tunnel in the center of the 70S ribosome. The chain is Large ribosomal subunit protein uL22 from Leuconostoc citreum (strain KM20).